A 601-amino-acid chain; its full sequence is Glutathione-regulated potassium-efflux system protein KefB (601 aa).

The next 13 membrane-spanning stretches (helical) occupy residues 4-24, 29-49, 55-75, 87-107, 111-131, 152-172, 177-197, 207-227, 230-250, 262-282, 284-304, 324-344, and 356-376; these read ADLLTAGVLFLFAAVAAVPLA, IGAVLGYLLAGIAIGPWGLGF, EILHFSELGVVFLMFIIGLEL, IFGVGAAQVLLSAAVLAGLLM, FLWQAAVVGGIGLAMSSTAMA, VLLFQDLAVIPALALVPLLAG, HFDWFKVAMKVLAFAVMLIGG, FIAASGVREVFTAATLLLVLS, LFMDALGLSMALGTFIAGVLL, AIDPFKGLLLGLFFISVGMSL, LGVLYTHLLWVAASVVILVVI, MQFASVLSQGGEFAFVLFSTA, and ALLLVTVTLSMMTTPLLMKGI. Residues 400-519 enclose the RCK N-terminal domain; sequence KPQVIVVGFG…AGVTQFSRET (120 aa).

Belongs to the monovalent cation:proton antiporter 2 (CPA2) transporter (TC 2.A.37) family. KefB subfamily. As to quaternary structure, interacts with the regulatory subunit KefG.

The protein resides in the cell inner membrane. Its function is as follows. Pore-forming subunit of a potassium efflux system that confers protection against electrophiles. Catalyzes K(+)/H(+) antiport. This Salmonella newport (strain SL254) protein is Glutathione-regulated potassium-efflux system protein KefB.